The primary structure comprises 355 residues: 3-isopropylmalate dehydrogenase (355 aa).

Arg-90, Arg-100, Arg-128, and Asp-222 together coordinate substrate. 3 residues coordinate Mg(2+): Asp-222, Asp-246, and Asp-250. 280 to 292 (GSAPDIAGKGIAN) lines the NAD(+) pocket.

The protein belongs to the isocitrate and isopropylmalate dehydrogenases family. LeuB type 1 subfamily. As to quaternary structure, homodimer. The cofactor is Mg(2+). Mn(2+) is required as a cofactor.

The protein resides in the cytoplasm. It catalyses the reaction (2R,3S)-3-isopropylmalate + NAD(+) = 4-methyl-2-oxopentanoate + CO2 + NADH. It participates in amino-acid biosynthesis; L-leucine biosynthesis; L-leucine from 3-methyl-2-oxobutanoate: step 3/4. In terms of biological role, catalyzes the oxidation of 3-carboxy-2-hydroxy-4-methylpentanoate (3-isopropylmalate) to 3-carboxy-4-methyl-2-oxopentanoate. The product decarboxylates to 4-methyl-2 oxopentanoate. The protein is 3-isopropylmalate dehydrogenase of Burkholderia thailandensis (strain ATCC 700388 / DSM 13276 / CCUG 48851 / CIP 106301 / E264).